Consider the following 165-residue polypeptide: UPF0179 protein Igni_1272 (165 aa).

It belongs to the UPF0179 family.

The chain is UPF0179 protein Igni_1272 from Ignicoccus hospitalis (strain KIN4/I / DSM 18386 / JCM 14125).